Consider the following 174-residue polypeptide: Shikimate kinase 2 (174 aa).

12–17 is an ATP binding site; the sequence is GCGKTT. Threonine 16 and aspartate 32 together coordinate Mg(2+). Residues aspartate 34, arginine 58, and glycine 79 each coordinate substrate. An LID domain region spans residues 112–126; it reads QAAPEEDLRPTLTGK. Arginine 120 lines the ATP pocket. Residue arginine 139 participates in substrate binding.

This sequence belongs to the shikimate kinase family. AroL subfamily. Monomer. Mg(2+) serves as cofactor.

It is found in the cytoplasm. It carries out the reaction shikimate + ATP = 3-phosphoshikimate + ADP + H(+). It functions in the pathway metabolic intermediate biosynthesis; chorismate biosynthesis; chorismate from D-erythrose 4-phosphate and phosphoenolpyruvate: step 5/7. Its function is as follows. Catalyzes the specific phosphorylation of the 3-hydroxyl group of shikimic acid using ATP as a cosubstrate. The polypeptide is Shikimate kinase 2 (Shigella boydii serotype 18 (strain CDC 3083-94 / BS512)).